We begin with the raw amino-acid sequence, 119 residues long: Iron-sulfur cluster insertion protein ErpA (119 aa).

Residues cysteine 47, cysteine 111, and cysteine 113 each contribute to the iron-sulfur cluster site.

The protein belongs to the HesB/IscA family. As to quaternary structure, homodimer. It depends on iron-sulfur cluster as a cofactor.

Functionally, required for insertion of 4Fe-4S clusters for at least IspG. The chain is Iron-sulfur cluster insertion protein ErpA from Alcanivorax borkumensis (strain ATCC 700651 / DSM 11573 / NCIMB 13689 / SK2).